The primary structure comprises 379 residues: Protein RecA (379 aa).

Positions 1 to 24 (MSVDVKSAQSSKSDSLQAEPRPGE) are disordered. Polar residues predominate over residues 7–16 (SAQSSKSDSL). 84-91 (GPESSGKT) contributes to the ATP binding site.

Belongs to the RecA family.

The protein localises to the cytoplasm. Can catalyze the hydrolysis of ATP in the presence of single-stranded DNA, the ATP-dependent uptake of single-stranded DNA by duplex DNA, and the ATP-dependent hybridization of homologous single-stranded DNAs. It interacts with LexA causing its activation and leading to its autocatalytic cleavage. The polypeptide is Protein RecA (Prochlorococcus marinus (strain MIT 9303)).